A 455-amino-acid chain; its full sequence is L-serine dehydratase (455 aa).

This sequence belongs to the iron-sulfur dependent L-serine dehydratase family. Requires [4Fe-4S] cluster as cofactor.

It carries out the reaction L-serine = pyruvate + NH4(+). Its pathway is carbohydrate biosynthesis; gluconeogenesis. The protein is L-serine dehydratase (sdaA) of Helicobacter pylori (strain ATCC 700392 / 26695) (Campylobacter pylori).